We begin with the raw amino-acid sequence, 308 residues long: Uricase-2 isozyme 1 (308 aa).

Residues lysine 17 and threonine 63 each act as charge relay system in the active site. 7 residues coordinate urate: threonine 63, aspartate 64, phenylalanine 165, arginine 182, valine 237, glutamine 238, and asparagine 264. Catalysis depends on histidine 266, which acts as the Charge relay system. A Microbody targeting signal motif is present at residues 306–308 (SKL).

Belongs to the uricase family.

The protein localises to the peroxisome. It catalyses the reaction urate + O2 + H2O = 5-hydroxyisourate + H2O2. The protein operates within purine metabolism; urate degradation; (S)-allantoin from urate: step 1/3. Functionally, catalyzes the oxidation of uric acid to 5-hydroxyisourate, which is further processed to form (S)-allantoin. This chain is Uricase-2 isozyme 1, found in Canavalia lineata (Beach bean).